Consider the following 144-residue polypeptide: Large ribosomal subunit protein uL13 (144 aa).

It belongs to the universal ribosomal protein uL13 family. In terms of assembly, part of the 50S ribosomal subunit.

Functionally, this protein is one of the early assembly proteins of the 50S ribosomal subunit, although it is not seen to bind rRNA by itself. It is important during the early stages of 50S assembly. The protein is Large ribosomal subunit protein uL13 of Lachnoclostridium phytofermentans (strain ATCC 700394 / DSM 18823 / ISDg) (Clostridium phytofermentans).